Here is a 102-residue protein sequence, read N- to C-terminus: Co-chaperonin GroES (102 aa).

It belongs to the GroES chaperonin family. As to quaternary structure, heptamer of 7 subunits arranged in a ring. Interacts with the chaperonin GroEL.

Its subcellular location is the cytoplasm. Functionally, together with the chaperonin GroEL, plays an essential role in assisting protein folding. The GroEL-GroES system forms a nano-cage that allows encapsulation of the non-native substrate proteins and provides a physical environment optimized to promote and accelerate protein folding. GroES binds to the apical surface of the GroEL ring, thereby capping the opening of the GroEL channel. In Chlamydia trachomatis serovar D (strain ATCC VR-885 / DSM 19411 / UW-3/Cx), this protein is Co-chaperonin GroES.